We begin with the raw amino-acid sequence, 880 residues long: Leucine--tRNA ligase (880 aa).

The 'HIGH' region signature appears at Pro-46–His-56. The 'KMSKS' region signature appears at Lys-638–Ser-642. Lys-641 contributes to the ATP binding site.

Belongs to the class-I aminoacyl-tRNA synthetase family.

It is found in the cytoplasm. The enzyme catalyses tRNA(Leu) + L-leucine + ATP = L-leucyl-tRNA(Leu) + AMP + diphosphate. The sequence is that of Leucine--tRNA ligase from Stenotrophomonas maltophilia (strain K279a).